The following is a 511-amino-acid chain: N-acetylgalactosamine-6-O-sulfatase (511 aa).

Serine 83 bears the 3-oxoalanine (Ser) mark.

The protein belongs to the sulfatase family. Post-translationally, the conversion to 3-oxoalanine (also known as C-formylglycine, FGly), of a serine or cysteine residue in prokaryotes and of a cysteine residue in eukaryotes, is critical for catalytic activity.

In terms of biological role, exosulfatase involved in the degradation of the glycosaminoglycans (GAGs) chondroitin sulfate (CS) and dermatan sulfate (DS). Catalyzes the hydrolysis of the 6-sulfate groups of the N-acetyl-D-galactosamine 6-sulfate units. GAG-specific sulfatases play a key role in the persistence of the major human gut symbiont B.thetaiotaomicron in the host gastrointestinal tract. This is N-acetylgalactosamine-6-O-sulfatase from Bacteroides thetaiotaomicron (strain ATCC 29148 / DSM 2079 / JCM 5827 / CCUG 10774 / NCTC 10582 / VPI-5482 / E50).